Here is a 376-residue protein sequence, read N- to C-terminus: Cyclin-dependent kinase 9-B (376 aa).

The Protein kinase domain occupies 19 to 319 (YERLAKIGQG…SDEALNHDFF (301 aa)). ATP-binding positions include 25–33 (IGQGTFGEV) and K48. D153 (proton acceptor) is an active-site residue. The disordered stretch occupies residues 345–376 (PPRRRGGHMPQQPANQARNPAATNQSEFDRVF). Over residues 354–369 (PQQPANQARNPAATNQ) the composition is skewed to low complexity.

It belongs to the protein kinase superfamily. CMGC Ser/Thr protein kinase family. CDC2/CDKX subfamily. As to quaternary structure, associates with cyclin-T to form P-TEFb.

It is found in the nucleus. It carries out the reaction L-seryl-[protein] + ATP = O-phospho-L-seryl-[protein] + ADP + H(+). The catalysed reaction is L-threonyl-[protein] + ATP = O-phospho-L-threonyl-[protein] + ADP + H(+). The enzyme catalyses [DNA-directed RNA polymerase] + ATP = phospho-[DNA-directed RNA polymerase] + ADP + H(+). Member of the cyclin-dependent kinase pair (CDK9/cyclin-T) complex, also called positive transcription elongation factor B (P-TEFb), which is proposed to facilitate the transition from abortive to production elongation by phosphorylating the CTD (C-terminal domain) of the large subunit of RNA polymerase II (RNAP II) and SUPT5H. This is Cyclin-dependent kinase 9-B (cdk9-b) from Xenopus laevis (African clawed frog).